The primary structure comprises 279 residues: Fatty acid metabolism regulator protein (279 aa).

One can recognise an HTH gntR-type domain in the interval 6 to 74 (KSPAGFAEKY…HGKPTKVNQF (69 aa)). Positions 34–53 (ERELSELIGVTRTTLREVLQ) form a DNA-binding region, H-T-H motif.

Homodimer.

It is found in the cytoplasm. In terms of biological role, multifunctional regulator of fatty acid metabolism. The sequence is that of Fatty acid metabolism regulator protein from Vibrio parahaemolyticus serotype O3:K6 (strain RIMD 2210633).